The chain runs to 479 residues: Odorant receptor coreceptor (479 aa).

Residues 1–43 (MMKMKQQGLVADLLPNIRVMKFFGHFVFNYYDDNSSKYLHKIF) are Cytoplasmic-facing. A helical membrane pass occupies residues 44–64 (CCVNLFLLLLQFALCAVNLII). Residues 65–73 (ESADVDDLT) lie on the Extracellular side of the membrane. Residues 74-94 (ANTITLLFFTHSIVKIIYFAV) form a helical membrane-spanning segment. The Cytoplasmic portion of the chain corresponds to 95–133 (RSKYFYRTWAIWNNPNSHPLFAESNARYHAIALKKMRLL). Residues 134-154 (LFLVGATTVLSAIAWTVLTFF) traverse the membrane as a helical segment. The Extracellular portion of the chain corresponds to 155 to 190 (EHPIRKLVDPVTNETTIIELPQLLLRSYYPFDASKG). A glycan (N-linked (GlcNAc...) asparagine) is linked at N167. The helical transmembrane segment at 191–211 (IMHVIVLIYQFYWVLFMLIDA) threads the bilayer. The Cytoplasmic segment spans residues 212-350 (NSLDVLFCSW…IVRLVTAVGD (139 aa)). Positions 261-280 (SAEHLRESENQPPPPVPPQG) are disordered. The chain crosses the membrane as a helical span at residues 351–371 (AYGFALLLHMLTTTITLTLLA). The Extracellular portion of the chain corresponds to 372–383 (YQATKVNGVNVY). Residues 384-404 (AASTIGYIIYTFGQVFLFCIF) traverse the membrane as a helical segment. Over 405 to 455 (GNRLIEESTSVMEAAYSCHWYDGSEEAKTFVQIVCQQCQKAMSISGAKFFT) the chain is Cytoplasmic. A helical membrane pass occupies residues 456 to 476 (VSLDLFASVLGAVVTYFMVLV). Residues 477–479 (QLK) are Extracellular-facing.

This sequence belongs to the insect chemoreceptor superfamily. Heteromeric odorant receptor channel (TC 1.A.69) family. Orco subfamily. Heterodimer with conventional odorant receptors (ORs).

The protein localises to the cell membrane. In terms of biological role, odorant coreceptor which complexes with conventional odorant receptors (ORs) to form odorant-sensing units, providing sensitive and prolonged odorant signaling and calcium permeability. Obligate coreceptor of all odorant receptors. Orco is a universal and integral part of the functional odorant receptor, involved in the dendritic localization of other olfactory receptors. Can form functional ion channels in the absence of an odor-binding odorant receptor. Plays a central role in the perception of olfactory stimuli in ants and is essential for ant social organization. Required for pheromone sensing and mating behavior. Also required for the development and maintenance of odorant receptor neurons (ORNs) and of antennal lobe glomeruli. The protein is Odorant receptor coreceptor of Harpegnathos saltator (Jerdon's jumping ant).